Here is a 491-residue protein sequence, read N- to C-terminus: Probable cytosol aminopeptidase (491 aa).

Mn(2+) is bound by residues K263 and D268. The active site involves K275. Mn(2+) contacts are provided by D286, D345, and E347. Residue R349 is part of the active site.

The protein belongs to the peptidase M17 family. It depends on Mn(2+) as a cofactor.

Its subcellular location is the cytoplasm. The catalysed reaction is Release of an N-terminal amino acid, Xaa-|-Yaa-, in which Xaa is preferably Leu, but may be other amino acids including Pro although not Arg or Lys, and Yaa may be Pro. Amino acid amides and methyl esters are also readily hydrolyzed, but rates on arylamides are exceedingly low.. It catalyses the reaction Release of an N-terminal amino acid, preferentially leucine, but not glutamic or aspartic acids.. Its function is as follows. Presumably involved in the processing and regular turnover of intracellular proteins. Catalyzes the removal of unsubstituted N-terminal amino acids from various peptides. The sequence is that of Probable cytosol aminopeptidase from Haemophilus influenzae (strain PittEE).